The chain runs to 921 residues: Isoleucine--tRNA ligase (921 aa).

Positions 57–67 (PYANGDIHMGH) match the 'HIGH' region motif. Glu552 contacts L-isoleucyl-5'-AMP. A 'KMSKS' region motif is present at residues 593-597 (KMSKS). Residue Lys596 participates in ATP binding. Zn(2+)-binding residues include Cys888, Cys891, Cys908, and Cys911.

Belongs to the class-I aminoacyl-tRNA synthetase family. IleS type 1 subfamily. In terms of assembly, monomer. The cofactor is Zn(2+).

Its subcellular location is the cytoplasm. It carries out the reaction tRNA(Ile) + L-isoleucine + ATP = L-isoleucyl-tRNA(Ile) + AMP + diphosphate. Its function is as follows. Catalyzes the attachment of isoleucine to tRNA(Ile). As IleRS can inadvertently accommodate and process structurally similar amino acids such as valine, to avoid such errors it has two additional distinct tRNA(Ile)-dependent editing activities. One activity is designated as 'pretransfer' editing and involves the hydrolysis of activated Val-AMP. The other activity is designated 'posttransfer' editing and involves deacylation of mischarged Val-tRNA(Ile). In Bacillus cereus (strain B4264), this protein is Isoleucine--tRNA ligase.